The following is an 850-amino-acid chain: Protein translocase subunit SecA (850 aa).

Residues Q87, 105-109 (GEGKT), and D494 each bind ATP. 4 residues coordinate Zn(2+): C834, C836, C845, and C846.

This sequence belongs to the SecA family. In terms of assembly, monomer and homodimer. Part of the essential Sec protein translocation apparatus which comprises SecA, SecYEG and auxiliary proteins SecDF-YajC and YidC. The cofactor is Zn(2+).

The protein resides in the cell inner membrane. The protein localises to the cytoplasm. The enzyme catalyses ATP + H2O + cellular proteinSide 1 = ADP + phosphate + cellular proteinSide 2.. Its function is as follows. Part of the Sec protein translocase complex. Interacts with the SecYEG preprotein conducting channel. Has a central role in coupling the hydrolysis of ATP to the transfer of proteins into and across the cell membrane, serving as an ATP-driven molecular motor driving the stepwise translocation of polypeptide chains across the membrane. The chain is Protein translocase subunit SecA from Desulfotalea psychrophila (strain LSv54 / DSM 12343).